A 631-amino-acid polypeptide reads, in one-letter code: Phosphomethylpyrimidine synthase (631 aa).

Substrate is bound by residues asparagine 231, methionine 260, tyrosine 289, histidine 325, 345–347 (SRG), 386–389 (DGLR), and glutamate 425. Residue histidine 429 coordinates Zn(2+). A substrate-binding site is contributed by tyrosine 452. Histidine 493 contributes to the Zn(2+) binding site. Residues cysteine 573, cysteine 576, and cysteine 581 each contribute to the [4Fe-4S] cluster site.

This sequence belongs to the ThiC family. As to quaternary structure, homodimer. Requires [4Fe-4S] cluster as cofactor.

It carries out the reaction 5-amino-1-(5-phospho-beta-D-ribosyl)imidazole + S-adenosyl-L-methionine = 4-amino-2-methyl-5-(phosphooxymethyl)pyrimidine + CO + 5'-deoxyadenosine + formate + L-methionine + 3 H(+). The protein operates within cofactor biosynthesis; thiamine diphosphate biosynthesis. Functionally, catalyzes the synthesis of the hydroxymethylpyrimidine phosphate (HMP-P) moiety of thiamine from aminoimidazole ribotide (AIR) in a radical S-adenosyl-L-methionine (SAM)-dependent reaction. The polypeptide is Phosphomethylpyrimidine synthase (Acinetobacter baylyi (strain ATCC 33305 / BD413 / ADP1)).